Here is a 196-residue protein sequence, read N- to C-terminus: MAKNGLVLCILVVSLLLDQTDGYPSRMKARKHSKRRVKAKDDDLKSQVEKLWREVNALKEMQALQTVCLRGTKVHKKCYLASEGLKHYHEANEDCISKGGTLVVPRNSDEINALRDYGKRSLPGVNDFWLGINDMVTEGKFLDVHGFAVSFLNWDRAQPSGGKRENCVLFSQSAQGKWSDEACRSSKRYICEFIIP.

An N-terminal signal peptide occupies residues 1 to 22; that stretch reads MAKNGLVLCILVVSLLLDQTDG. Intrachain disulfides connect Cys-68-Cys-78, Cys-95-Cys-191, and Cys-167-Cys-183. Positions 74–192 constitute a C-type lectin domain; the sequence is VHKKCYLASE…CRSSKRYICE (119 aa).

The protein resides in the secreted. Promotes cell adhesion to laminin and fibronectin. This is C-type lectin domain family 3 member A (Clec3a) from Mus musculus (Mouse).